We begin with the raw amino-acid sequence, 370 residues long: Peptide chain release factor 1 (370 aa).

Residue Gln237 is modified to N5-methylglutamine. Residues 286 to 296 (ERQRSARDATR) show a composition bias toward basic and acidic residues. A disordered region spans residues 286 to 310 (ERQRSARDATRKSQVGTGDRSEKIR).

This sequence belongs to the prokaryotic/mitochondrial release factor family. Methylated by PrmC. Methylation increases the termination efficiency of RF1.

The protein resides in the cytoplasm. Its function is as follows. Peptide chain release factor 1 directs the termination of translation in response to the peptide chain termination codons UAG and UAA. In Anaeromyxobacter dehalogenans (strain 2CP-C), this protein is Peptide chain release factor 1.